Here is an 806-residue protein sequence, read N- to C-terminus: Polyribonucleotide nucleotidyltransferase (806 aa).

2 residues coordinate Mg(2+): Asp-488 and Asp-494. The KH domain maps to 555-614 (PQIRTVQIPTDKIRDLIGPGGKTIRGIIEATQVKIDVDDTGRVNIASSDEEGLKKALAMI). Residues 624–691 (GKTYLGKVVR…EGNRIKLSRK (68 aa)) enclose the S1 motif domain. Positions 698–806 (RQKLGLPEPG…QGGGGNRGPQ (109 aa)) are disordered. The segment covering 704–717 (PEPGAEAPAAAEGQ) has biased composition (low complexity). The segment covering 738–757 (GGEDFDDFDEEGGEGEGEDE) has biased composition (acidic residues). Positions 758–774 (NFNREDTPNSAPGERRP) are enriched in basic and acidic residues. Over residues 783–792 (RGRRRRRGRG) the composition is skewed to basic residues. Residues 793–806 (RGPGQGGGGNRGPQ) show a composition bias toward gly residues.

Belongs to the polyribonucleotide nucleotidyltransferase family. The cofactor is Mg(2+).

It localises to the cytoplasm. It catalyses the reaction RNA(n+1) + phosphate = RNA(n) + a ribonucleoside 5'-diphosphate. Its function is as follows. Involved in mRNA degradation. Catalyzes the phosphorolysis of single-stranded polyribonucleotides processively in the 3'- to 5'-direction. The protein is Polyribonucleotide nucleotidyltransferase of Acidobacterium capsulatum (strain ATCC 51196 / DSM 11244 / BCRC 80197 / JCM 7670 / NBRC 15755 / NCIMB 13165 / 161).